A 184-amino-acid chain; its full sequence is Elongation factor P (184 aa).

It belongs to the elongation factor P family.

It is found in the cytoplasm. The protein operates within protein biosynthesis; polypeptide chain elongation. Functionally, involved in peptide bond synthesis. Stimulates efficient translation and peptide-bond synthesis on native or reconstituted 70S ribosomes in vitro. Probably functions indirectly by altering the affinity of the ribosome for aminoacyl-tRNA, thus increasing their reactivity as acceptors for peptidyl transferase. The sequence is that of Elongation factor P from Mycoplasma mycoides subsp. mycoides SC (strain CCUG 32753 / NCTC 10114 / PG1).